The following is a 104-amino-acid chain: Synaptic plasticity regulator PANTS (104 aa).

The disordered stretch occupies residues 58–104; that stretch reads RRSAEAQADSLPPGPEGEPRVAGAGPNAVTGILTRNQGTERPHGDTR. The span at 95–104 shows a compositional bias: basic and acidic residues; sequence GTERPHGDTR.

It belongs to the UPF0545 family. In terms of assembly, interacts with RTN4 isoform A/Nogo-A; the interaction results in enhanced RTN4-mediated inhibition of AMPA receptor clustering. Also interacts with NCAM1, RANBP2 and CCT8. Rapidly degraded by proteolysis following neuronal stimulation, resulting in increased AMPA receptor clustering.

Its subcellular location is the synapse. The protein resides in the synaptic cleft. Its function is as follows. Negatively regulates long-term potentiation and modulates adult synaptic plasticity. Stabilizes the interaction of RTN4 isoform A/Nogo-A with its receptors, inhibiting clustering of postsynaptic AMPA receptors at synaptic sites. Upon neuronal stimulation, degraded at synapses, reducing RTN4 signaling and allowing AMPA receptor clustering at individual synapses. In Bos taurus (Bovine), this protein is Synaptic plasticity regulator PANTS.